The sequence spans 297 residues: Band 7 protein AAEL010189 (297 aa).

Residues 1 to 13 (MGVVESITNSTKP) are compositionally biased toward polar residues. The interval 1–30 (MGVVESITNSTKPGVTKKSSPEAEDDSNGE) is disordered. The chain crosses the membrane as a helical span at residues 37–57 (ILIFLSWVLVVLTMPFSLLVC).

This sequence belongs to the band 7/mec-2 family.

The protein localises to the membrane. This chain is Band 7 protein AAEL010189, found in Aedes aegypti (Yellowfever mosquito).